A 236-amino-acid polypeptide reads, in one-letter code: 2-C-methyl-D-erythritol 4-phosphate cytidylyltransferase (236 aa).

This sequence belongs to the IspD/TarI cytidylyltransferase family. IspD subfamily.

It carries out the reaction 2-C-methyl-D-erythritol 4-phosphate + CTP + H(+) = 4-CDP-2-C-methyl-D-erythritol + diphosphate. It participates in isoprenoid biosynthesis; isopentenyl diphosphate biosynthesis via DXP pathway; isopentenyl diphosphate from 1-deoxy-D-xylulose 5-phosphate: step 2/6. Functionally, catalyzes the formation of 4-diphosphocytidyl-2-C-methyl-D-erythritol from CTP and 2-C-methyl-D-erythritol 4-phosphate (MEP). The chain is 2-C-methyl-D-erythritol 4-phosphate cytidylyltransferase from Azoarcus sp. (strain BH72).